The sequence spans 178 residues: MSRIGKQPVAIPSGVEVKLEGNLLKFKKGNLAKELDTKANVNVEIKEGQILFSPKGEDRQSRAYWGTYRALTQNIIIGLTDGFSKTLEINGVGYKAALKGKVLELALGFSHPINYAIPEGIEITVDKNNIIVKGSDKQVVGQVAAQIREFRPPEPYKGKGVKYSTERIIRKAGKTSKK.

This sequence belongs to the universal ribosomal protein uL6 family. In terms of assembly, part of the 50S ribosomal subunit.

Its function is as follows. This protein binds to the 23S rRNA, and is important in its secondary structure. It is located near the subunit interface in the base of the L7/L12 stalk, and near the tRNA binding site of the peptidyltransferase center. This Campylobacter lari (strain RM2100 / D67 / ATCC BAA-1060) protein is Large ribosomal subunit protein uL6.